We begin with the raw amino-acid sequence, 977 residues long: Serine/threonine-protein kinase/endoribonuclease IRE1 (977 aa).

The signal sequence occupies residues 1–18 (MPARRLLLLLTLLLPGLG). At 19 to 443 (IFGSTSTVTL…EAPVDSMLKD (425 aa)) the chain is on the lumenal side. N-linked (GlcNAc...) asparagine glycosylation is present at Asn-176. Polar residues predominate over residues 410 to 419 (TSENAPTTVS). The segment at 410–434 (TSENAPTTVSRDVEEKPAHAPARPE) is disordered. A helical membrane pass occupies residues 444 to 464 (MATIILSTFLLIGWVAFIITY). The Cytoplasmic segment spans residues 465-977 (PLSMHQQQQL…PQPPVTPDAL (513 aa)). A disordered region spans residues 491–559 (QQQQQLPFHP…PSLEQDDGDE (69 aa)). The segment covering 513 to 552 (TSGPYSESSGTSSPSTSPRASNHSLCSGSSASKAGSSPSL) has biased composition (low complexity). The Protein kinase domain maps to 571 to 832 (FCPKDVLGHG…AKHVLKHPFF (262 aa)). Residues 577–585 (LGHGAEGTI), Lys-599, and 643–645 (ELC) contribute to the ATP site. The active-site Proton acceptor is Asp-688. ATP is bound by residues 690-693 (KPHN) and Asp-711. A phosphoserine mark is found at Ser-724 and Ser-729. In terms of domain architecture, KEN spans 835–963 (LEKQLQFFQD…ERLFQPYYFH (129 aa)). Residues 906–907 (NK) form an interacts with hydroxy-aryl-aldehyde inhibitors region. Thr-973 is subject to Phosphothreonine.

The protein belongs to the protein kinase superfamily. Ser/Thr protein kinase family. In terms of assembly, monomer. Homodimer; disulfide-linked; homodimerization takes place in response to endoplasmic reticulum stress and promotes activation of the kinase and endoribonuclease activities. Dimer formation is driven by hydrophobic interactions within the N-terminal luminal domains and stabilized by disulfide bridges. Interacts (via the luminal region) with DNAJB9/ERdj4; interaction takes place in unstressed cells and promotes recruitment of HSPA5/BiP. Interacts (via the luminal region) with HSPA5/BiP; HSPA5/BiP is a negative regulator of the unfolded protein response (UPR) that prevents homodimerization of ERN1/IRE1 and subsequent activation of the protein. Interaction with HSPA5 also competitively inhibits ERN1 interaction with MANF. Interacts with PDIA6, a negative regulator of the UPR; the interaction is direct and disrupts homodimerization. Interacts with DAB2IP (via PH domain); the interaction occurs in a endoplasmic reticulum stress-induced dependent manner and is required for subsequent recruitment of TRAF2 to ERN1/IRE1. Interacts with TAOK3 and TRAF2. Interacts with RNF13. Interacts with LACC1. Interacts (when unphosphorylated) with DDRGK1; interaction is dependent on UFM1 and takes place in response to endoplasmic reticulum stress, regulating ERN1/IRE1-alpha stability. Interacts (via N-terminus) with P4HB/PDIA1; the interaction is enhanced by phosphorylation of P4HB by FAM20C in response to endoplasmic reticulum stress and results in attenuation of ERN1 activity. Interacts with TMBIM6; this interaction inhibits ERN1 activity. Interacts (via luminal domain) with MANF (via C-terminus); the interaction is decreased in the presence of increasing concentrations of Ca(2+). Mg(2+) serves as cofactor. In terms of processing, autophosphorylated following homodimerization. Autophosphorylation promotes activation of the endoribonuclease domain. In response to ER stress, phosphorylated at Ser-724, Ser-729 and possibly Ser-726; phosphorylation promotes oligomerization and endoribonuclease activity. Dephosphorylated at Ser-724, Ser-729 and possibly Ser-726 by RPAP2 to abort failed ER-stress adaptation and trigger apoptosis. Phosphorylated at Ser-724; in response to the ER stressor tunicamycin. ADP-ribosylated by PARP16 upon ER stress, which increases both kinase and endonuclease activities. As to expression, ubiquitously expressed. High levels observed in pancreatic tissue.

Its subcellular location is the endoplasmic reticulum membrane. It carries out the reaction L-seryl-[protein] + ATP = O-phospho-L-seryl-[protein] + ADP + H(+). The enzyme catalyses L-threonyl-[protein] + ATP = O-phospho-L-threonyl-[protein] + ADP + H(+). The kinase domain is activated by trans-autophosphorylation following homodimerization. Kinase activity is required for activation of the endoribonuclease domain. Endoribonuclease activity is specifically inhibited by hydroxy-aryl-aldehydes (HAA). In terms of biological role, serine/threonine-protein kinase and endoribonuclease that acts as a key sensor for the endoplasmic reticulum unfolded protein response (UPR). In unstressed cells, the endoplasmic reticulum luminal domain is maintained in its inactive monomeric state by binding to the endoplasmic reticulum chaperone HSPA5/BiP. Accumulation of misfolded proteins in the endoplasmic reticulum causes release of HSPA5/BiP, allowing the luminal domain to homodimerize, promoting autophosphorylation of the kinase domain and subsequent activation of the endoribonuclease activity. The endoribonuclease activity is specific for XBP1 mRNA and excises 26 nucleotides from XBP1 mRNA. The resulting spliced transcript of XBP1 encodes a transcriptional activator protein that up-regulates expression of UPR target genes. Acts as an upstream signal for ER stress-induced GORASP2-mediated unconventional (ER/Golgi-independent) trafficking of CFTR to cell membrane by modulating the expression and localization of SEC16A. The chain is Serine/threonine-protein kinase/endoribonuclease IRE1 from Homo sapiens (Human).